A 525-amino-acid chain; its full sequence is Beta-1,4-xylosyltransferase IRX14 (525 aa).

Topologically, residues 1–35 are cytoplasmic; the sequence is MKLSALHQSYLNRRSNSFRSPTSLDSSVDGSGKSL. A helical; Signal-anchor for type II membrane protein membrane pass occupies residues 36 to 56; that stretch reads IAVFWLILHCLCCLISLVLGF. The Lumenal portion of the chain corresponds to 57–525; the sequence is RFSRLVFFFL…SSSSKHQERN (469 aa). Residues Asn102, Asn204, and Asn326 are each glycosylated (N-linked (GlcNAc...) asparagine). The segment at 452–525 is disordered; that stretch reads RTPWPDVPPE…SSSSKHQERN (74 aa). Residues 471–488 are compositionally biased toward polar residues; it reads PLSQGNTVVVIPKQQQHP. Basic residues predominate over residues 489-503; sequence TKIRKPKRKSKKSKH. Residues 508–519 are compositionally biased toward polar residues; that stretch reads TDTTTQVYSSSS.

It belongs to the glycosyltransferase 43 family. Expressed in developing interfascicular fibers and xylem cells in stems and developing secondary xylem in roots.

The protein resides in the golgi apparatus membrane. It carries out the reaction [(1-&gt;4)-beta-D-xylan](n) + UDP-alpha-D-xylose = [(1-&gt;4)-beta-D-xylan](n+1) + UDP + H(+). In terms of biological role, involved in the synthesis of the hemicellulose glucuronoxylan, a major component of secondary cell walls. Involved in the elongation of glucuronoxylan xylosyl backbone. Xylan xylosyltransferase that acts cooperatively with IRX9 to achieve the successive addition of xylosyl residues during xylan backbone elongation. Required for the proper composition and structural properties of released seed coat mucilage. Required for the production of highly branched xylan polymers in seed coat mucilage. Xylan with xylose side chains seems to be necessary for pectin attachment to the seed surface. Together with MUCI70, required for xylan and pectin synthesis in seed coat epidermal (SCE) cells. This is Beta-1,4-xylosyltransferase IRX14 from Arabidopsis thaliana (Mouse-ear cress).